Here is a 172-residue protein sequence, read N- to C-terminus: MTELDHPQHRPNVGVVLFHPDGRVWLGRRHRQAPPYNWQFPQGGVDEGEDLEVAARRELAEETGVTSVELLGRTEGWITYDFPPEVMANPKHARGWRGQKQVWFAYRFVGEESEIDLEADEHIEFDAWRWGRLDETPELIVPFKRGVYEAVVAAFQGFARGDSPVRRREGEN.

The 146-residue stretch at Gln8–Ala153 folds into the Nudix hydrolase domain. A Nudix box motif is present at residues Gly43–Gly64.

It belongs to the Nudix hydrolase family. RppH subfamily. A divalent metal cation serves as cofactor.

Accelerates the degradation of transcripts by removing pyrophosphate from the 5'-end of triphosphorylated RNA, leading to a more labile monophosphorylated state that can stimulate subsequent ribonuclease cleavage. This chain is RNA pyrophosphohydrolase, found in Caulobacter vibrioides (strain ATCC 19089 / CIP 103742 / CB 15) (Caulobacter crescentus).